The primary structure comprises 453 residues: Homeobox protein meis3 (453 aa).

The disordered stretch occupies residues 33–64 (HHSLSQSAPYGSTGAAHRVPMPPGMGSNDGLK). The region spanning 102-185 (GGDVCSSDSF…PIDLVIDDRD (84 aa)) is the MEIS N-terminal domain. The interval 192 to 272 (LEDFTGSCTS…RDKKRNKKRG (81 aa)) is disordered. The segment covering 197–209 (GSCTSLSDQNNSW) has biased composition (polar residues). A compositionally biased stretch (low complexity) spans 218–230 (STHSGTPGPSSGG). The segment covering 231–242 (LASQSGDNSSEQ) has biased composition (polar residues). Residues 267-329 (RNKKRGIFPK…NARRRIVQPM (63 aa)) constitute a DNA-binding region (homeobox).

It belongs to the TALE/MEIS homeobox family.

The protein localises to the nucleus. A caudalizing protein which is required to pattern the anterior/posterior (A/P) axis during central nervous system (CNS) formation. Inhibits anterior neural expression and acts as a transcriptional activator to induce posterior neural gene expression. Maintains a proper A/P balance required for hindbrain formation by activating the FGF/MAPK pathway, which modulates the planar cell polarity (PCP) pathway. Interacts with retinoid signaling during hindbrain patterning. The polypeptide is Homeobox protein meis3 (Xenopus tropicalis (Western clawed frog)).